Consider the following 183-residue polypeptide: Dual-action ribosomal maturation protein DarP (183 aa).

Belongs to the DarP family.

Its subcellular location is the cytoplasm. Functionally, member of a network of 50S ribosomal subunit biogenesis factors which assembles along the 30S-50S interface, preventing incorrect 23S rRNA structures from forming. Promotes peptidyl transferase center (PTC) maturation. This Escherichia coli O7:K1 (strain IAI39 / ExPEC) protein is Dual-action ribosomal maturation protein DarP.